Reading from the N-terminus, the 936-residue chain is E3 ubiquitin-protein ligase ZNRF3 (936 aa).

The disordered stretch occupies residues 1–31 (MRPRSGGRPGATGRRRRRLRRRPRGLRCSRL). Residues 1–55 (MRPRSGGRPGATGRRRRRLRRRPRGLRCSRLPPPPPLPLLLGLLLAAAGPGAARA) form the signal peptide. The span at 13–27 (GRRRRRLRRRPRGLR) shows a compositional bias: basic residues. Topologically, residues 56–219 (KETAFVEVVL…PRQPTEYFDM (164 aa)) are extracellular. Residues 220 to 240 (GIFLAFFVVVSLVCLILLVKI) form a helical membrane-spanning segment. Residues 241-936 (KLKQRRSQNS…HSADSSSPGA (696 aa)) lie on the Cytoplasmic side of the membrane. Residues 293–334 (CAICLEKYIDGEELRVIPCTHRFHRKCVDPWLLQHHTCPHCR) form an RING-type; atypical zinc finger. Disordered regions lie at residues 608–693 (SEAG…SPGA), 739–758 (LYEGSGPAGGEPQSGSSQGL), 849–875 (THSLGSWGGTRGPDTPRPHRGLGATRE), and 892–936 (CPPE…SPGA). The span at 654–684 (SGDQVSTCSLEMNYSSNSSLEHRGPNSSTSE) shows a compositional bias: polar residues. Over residues 913-922 (ESSTTATEAA) the composition is skewed to low complexity.

Belongs to the ZNRF3 family. Interacts with LRP6, FZD4, FZD5, FZD6 and FZD8. Interacts with RSPO1; interaction promotes indirect interaction with LGR4 and membrane clearance of ZNRF3. Also interacts with RSPO2. Interacts with LMBR1L.

The protein localises to the cell membrane. The enzyme catalyses S-ubiquitinyl-[E2 ubiquitin-conjugating enzyme]-L-cysteine + [acceptor protein]-L-lysine = [E2 ubiquitin-conjugating enzyme]-L-cysteine + N(6)-ubiquitinyl-[acceptor protein]-L-lysine.. It functions in the pathway protein modification; protein ubiquitination. Its activity is regulated as follows. Negatively regulated by R-spondin proteins such as RSPO1: interaction with RSPO1 induces the indirect association between ZNRF3 and LGR4, promoting membrane clearance of ZNRF3. Functionally, E3 ubiquitin-protein ligase that acts as a negative regulator of the Wnt signaling pathway by mediating the ubiquitination and subsequent degradation of Wnt receptor complex components Frizzled and LRP6. Acts on both canonical and non-canonical Wnt signaling pathway. Acts as a tumor suppressor in the intestinal stem cell zone by inhibiting the Wnt signaling pathway, thereby restricting the size of the intestinal stem cell zone. Along with RSPO2 and RNF43, constitutes a master switch that governs limb specification. The sequence is that of E3 ubiquitin-protein ligase ZNRF3 (ZNRF3) from Homo sapiens (Human).